A 791-amino-acid polypeptide reads, in one-letter code: Genome polyprotein (791 aa).

The interval 1–15 (MNNQRKKTGRPSFNM) is interaction with host EXOC1. Residues 1–101 (MNNQRKKTGR…LNIMNRRKRS (101 aa)) are Cytoplasmic-facing. The tract at residues 37–72 (LLSGQGPMKLVMAFIAFLRFLAIPPTAGILARWSSF) is hydrophobic; homodimerization of capsid protein C. Positions 101 to 114 (SVTMLLMLLPTALA) are cleaved as a propeptide — ER anchor for the capsid protein C, removed in mature form by serine protease NS3. A helical transmembrane segment spans residues 102-119 (VTMLLMLLPTALAFHLTT). Residues 120 to 242 (RGGEPTLIVS…QIQKVETWAL (123 aa)) are Extracellular-facing. N-linked (GlcNAc...) asparagine; by host glycosylation occurs at asparagine 183. The helical transmembrane segment at 243 to 260 (RHPGFTVIGLFLAHAIGT) threads the bilayer. Position 261 (serine 261) is a topological domain, cytoplasmic. Residues 262–280 (ITQKGIIFILLMLVTPSMA) form a helical membrane-spanning segment. The Extracellular portion of the chain corresponds to 281 to 725 (MRCVGIGNRD…IHQIFGTAYG (445 aa)). Cystine bridges form between cysteine 283/cysteine 310, cysteine 340/cysteine 401, cysteine 354/cysteine 385, and cysteine 372/cysteine 396. Asparagine 347 carries N-linked (GlcNAc...) asparagine; by host glycosylation. Positions 378 to 391 (DRGWGNGCGLFGKG) are fusion peptide. An N-linked (GlcNAc...) asparagine; by host glycan is attached at asparagine 433. Cystine bridges form between cysteine 465–cysteine 565 and cysteine 582–cysteine 613. Residues 726–746 (ILFSGVSWTMKIGIGILLTWL) traverse the membrane as a helical segment. The Cytoplasmic portion of the chain corresponds to 747-752 (GLNSRS). The chain crosses the membrane as a helical span at residues 753 to 775 (TSLSMTCIAVGMVTLYLGVMVQA). Topologically, residues 776–791 (DSGCVINWKGKELKCG) are extracellular. Cysteine 779 and cysteine 790 form a disulfide bridge.

Homodimer. Interacts (via N-terminus) with host EXOC1 (via C-terminus); this interaction results in EXOC1 degradation through the proteasome degradation pathway. In terms of assembly, forms heterodimers with envelope protein E in the endoplasmic reticulum and Golgi. As to quaternary structure, homodimer; in the endoplasmic reticulum and Golgi. Interacts with protein prM. Interacts with non-structural protein 1. Homodimer; Homohexamer when secreted. Interacts with envelope protein E. Specific enzymatic cleavages in vivo yield mature proteins. Cleavages in the lumen of endoplasmic reticulum are performed by host signal peptidase, wereas cleavages in the cytoplasmic side are performed by serine protease NS3. Signal cleavage at the 2K-4B site requires a prior NS3 protease-mediated cleavage at the 4A-2K site. In terms of processing, N-glycosylated. Post-translationally, N-glycosylated. The excreted form is glycosylated and this is required for efficient secretion of the protein from infected cells.

The protein localises to the virion. It localises to the host nucleus. Its subcellular location is the host cytoplasm. The protein resides in the host perinuclear region. It is found in the secreted. The protein localises to the virion membrane. It localises to the host endoplasmic reticulum membrane. Plays a role in virus budding by binding to the cell membrane and gathering the viral RNA into a nucleocapsid that forms the core of a mature virus particle. During virus entry, may induce genome penetration into the host cytoplasm after hemifusion induced by the surface proteins. Can migrate to the cell nucleus where it modulates host functions. Overcomes the anti-viral effects of host EXOC1 by sequestering and degrading the latter through the proteasome degradation pathway. Its function is as follows. Inhibits RNA silencing by interfering with host Dicer. Functionally, prevents premature fusion activity of envelope proteins in trans-Golgi by binding to envelope protein E at pH6.0. After virion release in extracellular space, gets dissociated from E dimers. In terms of biological role, acts as a chaperone for envelope protein E during intracellular virion assembly by masking and inactivating envelope protein E fusion peptide. prM is the only viral peptide matured by host furin in the trans-Golgi network probably to avoid catastrophic activation of the viral fusion activity in acidic GolGi compartment prior to virion release. prM-E cleavage is inefficient, and many virions are only partially matured. These uncleaved prM would play a role in immune evasion. May play a role in virus budding. Exerts cytotoxic effects by activating a mitochondrial apoptotic pathway through M ectodomain. May display a viroporin activity. Its function is as follows. Binds to host cell surface receptor and mediates fusion between viral and cellular membranes. Envelope protein is synthesized in the endoplasmic reticulum in the form of heterodimer with protein prM. They play a role in virion budding in the ER, and the newly formed immature particle is covered with 60 spikes composed of heterodimer between precursor prM and envelope protein E. The virion is transported to the Golgi apparatus where the low pH causes dissociation of PrM-E heterodimers and formation of E homodimers. prM-E cleavage is inefficient, and many virions are only partially matured. These uncleaved prM would play a role in immune evasion. Functionally, involved in immune evasion, pathogenesis and viral replication. Once cleaved off the polyprotein, is targeted to three destinations: the viral replication cycle, the plasma membrane and the extracellular compartment. Essential for viral replication. Required for formation of the replication complex and recruitment of other non-structural proteins to the ER-derived membrane structures. Excreted as a hexameric lipoparticle that plays a role against host immune response. Antagonizing the complement function. Binds to the host macrophages and dendritic cells. Inhibits signal transduction originating from Toll-like receptor 3 (TLR3). In terms of biological role, disrupts the host endothelial glycocalyx layer of host pulmonary microvascular endothelial cells, inducing degradation of sialic acid and shedding of heparan sulfate proteoglycans. NS1 induces expression of sialidases, heparanase, and activates cathepsin L, which activates heparanase via enzymatic cleavage. These effects are probably linked to the endothelial hyperpermeability observed in severe dengue disease. This Dengue virus type 1 (strain Jamaica/CV1636/1977) (DENV-1) protein is Genome polyprotein.